A 187-amino-acid chain; its full sequence is Fibroblast growth factor 4A (187 aa).

A signal peptide spans 1-22 (MTVPSALVPILLLGTAAVMVQC).

This sequence belongs to the heparin-binding growth factors family.

The protein resides in the secreted. In terms of biological role, plays an important role in the regulation of embryonic development, cell proliferation, and cell differentiation. Good candidate for an inducing factor with possible roles both in mesoderm induction at the blastula stage and in the formation of the anteroposterior axis at the gastrula stage. This Xenopus laevis (African clawed frog) protein is Fibroblast growth factor 4A (fgf4-a).